The following is a 438-amino-acid chain: MSSDSPAAGDGGEQAAAGTSVPSPSYDKQKEKARVSRTSLILWHAHQNDAAAVRKLLEEDPTLVHARDYDKRTPLHVASLHGWIDVVKCLLEFGADVNAQDRWKNTPLADAEGARKQKMIELLKSHGGLSYGQNGSHFEPKPVPPPIPKKCDWEIEPAELDFSNAAMIGKGSFGEIVKAYWRGTPVAVKRILPSLSDDRLVIQDFRHEVDLLVKLRHPNIVQFLGAVTERKPLMLITEYLRGGDLHQYLKEKGGLTPTTAVNFALDIARGMTYLHNEPNVIIHRDLKPRNVLLVNSSADHLKVGDFGLSKLIKVQNSHDVYKMTGETGSYRYMAPEVFKHRRYDKKVDVFSFAMILYEMLEGEPPFANHEPYEAAKHVSDGHRPTFRSKGCTPDLRELIVKCWDADMNQRPSFLDILKRLEKIKETLPSDHHWGLFTS.

The interval 1–31 is disordered; sequence MSSDSPAAGDGGEQAAAGTSVPSPSYDKQKE. 3 ANK repeats span residues 36-65, 70-99, and 103-133; these read SRTSLILWHAHQNDAAAVRKLLEEDPTLVH, DKRTPLHVASLHGWIDVVKCLLEFGADVNA, and WKNTPLADAEGARKQKMIELLKSHGGLSYGQ. The Protein kinase domain occupies 162 to 427; that stretch reads FSNAAMIGKG…KRLEKIKETL (266 aa). ATP-binding positions include 168–176 and Lys-189; that span reads IGKGSFGEI. Asp-285 (proton acceptor) is an active-site residue.

The protein belongs to the protein kinase superfamily. Ser/Thr protein kinase family. Interacts with BRL2. Binds to MSSP1/TMT1 at the tonoplast. Phosphorylated. In terms of tissue distribution, restricted to mature vascular cells. Mostly expressed in mature leaves and seeds, and, to a lower level, in seedlings, young leaves, flowers and siliques.

The protein resides in the vacuole. The enzyme catalyses L-seryl-[protein] + ATP = O-phospho-L-seryl-[protein] + ADP + H(+). It catalyses the reaction L-threonyl-[protein] + ATP = O-phospho-L-threonyl-[protein] + ADP + H(+). In terms of biological role, serine/threonine protein kinase which may function as an adapter protein for BRL2. Required during vascular development for the establishment of vein pattern in foliar organs. Mediates MSSP1/TMT1 phosphorylation and activation to enhance its carrier activity and consequently vacuolar sugar accumulation, particularly in response to cold. The chain is Serine/threonine-protein kinase VIK from Arabidopsis thaliana (Mouse-ear cress).